A 410-amino-acid chain; its full sequence is Formyl-CoA:oxalate CoA-transferase (410 aa).

Residues 18–19 (QS), 72–75 (LNTK), 96–98 (NFG), Arg104, and 136–139 (KAYE) each bind CoA. Catalysis depends on Asp168, which acts as the Nucleophile. A disordered region spans residues 221-245 (PLAEYPNEDFGDEVPRSGNASGGGQ). Residue 243 to 245 (GGQ) participates in substrate binding.

The protein belongs to the CoA-transferase III family. Frc subfamily. In terms of assembly, homodimer.

It carries out the reaction formyl-CoA + oxalate = oxalyl-CoA + formate. Its pathway is metabolic intermediate degradation; oxalate degradation; CO(2) and formate from oxalate: step 1/2. Its function is as follows. Involved in the catabolism of oxalate and in the adapatation to low pH via the induction of the oxalate-dependent acid tolerance response (ATR). Catalyzes the transfer of the CoA moiety from formyl-CoA to oxalate. The chain is Formyl-CoA:oxalate CoA-transferase from Streptomyces coelicolor (strain ATCC BAA-471 / A3(2) / M145).